Reading from the N-terminus, the 78-residue chain is Translational regulator CsrA (78 aa).

Belongs to the CsrA/RsmA family. As to quaternary structure, homodimer; the beta-strands of each monomer intercalate to form a hydrophobic core, while the alpha-helices form wings that extend away from the core.

Its subcellular location is the cytoplasm. A translational regulator that binds mRNA to regulate translation initiation and/or mRNA stability. Usually binds in the 5'-UTR at or near the Shine-Dalgarno sequence preventing ribosome-binding, thus repressing translation. Its main target seems to be the major flagellin gene, while its function is anatagonized by FliW. In Nitratidesulfovibrio vulgaris (strain ATCC 29579 / DSM 644 / CCUG 34227 / NCIMB 8303 / VKM B-1760 / Hildenborough) (Desulfovibrio vulgaris), this protein is Translational regulator CsrA.